Consider the following 263-residue polypeptide: 4-hydroxy-2-oxo-heptane-1,7-dioate aldolase (263 aa).

The active-site Proton acceptor is His-45. Gln-147 is a binding site for substrate. Glu-149 lines the a divalent metal cation pocket. The substrate site is built by Ala-174 and Asp-175. Residue Asp-175 coordinates a divalent metal cation.

This sequence belongs to the HpcH/HpaI aldolase family. As to quaternary structure, homohexamer; trimer of dimers. It depends on a divalent metal cation as a cofactor.

It carries out the reaction 4-hydroxy-2-oxoheptanedioate = succinate semialdehyde + pyruvate. It functions in the pathway aromatic compound metabolism; 4-hydroxyphenylacetate degradation; pyruvate and succinate semialdehyde from 4-hydroxyphenylacetate: step 7/7. Functionally, catalyzes the reversible retro-aldol cleavage of 4-hydroxy-2-ketoheptane-1,7-dioate (HKHD) to pyruvate and succinic semialdehyde. The sequence is that of 4-hydroxy-2-oxo-heptane-1,7-dioate aldolase from Salmonella enteritidis PT4 (strain P125109).